A 203-amino-acid chain; its full sequence is DNA-directed RNA polymerase III subunit rpc8 (203 aa).

This sequence belongs to the eukaryotic RPB7/RPC8 RNA polymerase subunit family. In terms of assembly, component of the RNA polymerase III (Pol III) complex consisting of 17 subunits. Rpc25/rpc8 and rpc17/rpc9 form a Pol III subcomplex.

The protein localises to the cytoplasm. Its subcellular location is the nucleus. DNA-dependent RNA polymerase catalyzes the transcription of DNA into RNA using the four ribonucleoside triphosphates as substrates. Specific peripheric component of RNA polymerase III which synthesizes small RNAs, such as 5S rRNA and tRNA. This chain is DNA-directed RNA polymerase III subunit rpc8 (rpc25), found in Schizosaccharomyces pombe (strain 972 / ATCC 24843) (Fission yeast).